A 334-amino-acid chain; its full sequence is MAETDERSLRDLLLESADDLEHIVKMIVDTLINRDKSVMLKNGETVTNIIKLFDSKQDSIKTLLKRVPEFQEREQLIRTLEAHVEKRDEVIQQLETNLKSCEVALTRSCFHANQKLKQMKEAELRPVNSEMLIKLAHQISKHNSVSAPLTWQMGDPSRPFPQEHEFRAGHLLNSKVQSTGPQLLPGKNVAQRPLITSPSASSSNGGTAPIRTVGTPLINSAPTGDFSPRTGFGTDEPPPIQQQVLRGATPNEKQWQNPGVSGATSTQSPYNRVSQSPSSSPNVKLKITGLPNRPGGIDQVQDVRDVEQMSSDSSNSSDSSDDEGASKKTGSSNK.

Residues 71–100 (QEREQLIRTLEAHVEKRDEVIQQLETNLKS) adopt a coiled-coil conformation. Residues 193-334 (PLITSPSASS…ASKKTGSSNK (142 aa)) form a disordered region. Polar residues-rich tracts occupy residues 194 to 206 (LITS…SNGG) and 251 to 282 (NEKQ…SSPN).

It belongs to the Mediator complex subunit 4 family. As to quaternary structure, component of the Mediator complex.

Its subcellular location is the nucleus. In terms of biological role, component of the Mediator complex, a coactivator involved in the regulated transcription of nearly all RNA polymerase II-dependent genes. Mediator functions as a bridge to convey information from gene-specific regulatory proteins to the basal RNA polymerase II transcription machinery. Mediator is recruited to promoters by direct interactions with regulatory proteins and serves as a scaffold for the assembly of a functional preinitiation complex with RNA polymerase II and the general transcription factors. The chain is Mediator of RNA polymerase II transcription subunit 4 (mdt-4) from Caenorhabditis elegans.